The sequence spans 399 residues: 1-deoxy-D-xylulose 5-phosphate reductoisomerase (399 aa).

NADPH is bound by residues Thr-16, Gly-17, Ser-18, Ile-19, Gly-42, Arg-43, Asn-44, and Asn-127. Lys-128 is a 1-deoxy-D-xylulose 5-phosphate binding site. Glu-129 is an NADPH binding site. A Mn(2+)-binding site is contributed by Asp-153. 1-deoxy-D-xylulose 5-phosphate-binding residues include Ser-154, Glu-155, Ser-179, and His-202. Residue Glu-155 coordinates Mn(2+). Gly-208 lines the NADPH pocket. 1-deoxy-D-xylulose 5-phosphate-binding residues include Ser-215, Asn-220, Lys-221, and Glu-224. Glu-224 contacts Mn(2+).

The protein belongs to the DXR family. It depends on Mg(2+) as a cofactor. Requires Mn(2+) as cofactor.

The enzyme catalyses 2-C-methyl-D-erythritol 4-phosphate + NADP(+) = 1-deoxy-D-xylulose 5-phosphate + NADPH + H(+). It participates in isoprenoid biosynthesis; isopentenyl diphosphate biosynthesis via DXP pathway; isopentenyl diphosphate from 1-deoxy-D-xylulose 5-phosphate: step 1/6. Its function is as follows. Catalyzes the NADPH-dependent rearrangement and reduction of 1-deoxy-D-xylulose-5-phosphate (DXP) to 2-C-methyl-D-erythritol 4-phosphate (MEP). The protein is 1-deoxy-D-xylulose 5-phosphate reductoisomerase of Caulobacter vibrioides (strain NA1000 / CB15N) (Caulobacter crescentus).